Here is a 553-residue protein sequence, read N- to C-terminus: MNIIDQVKQTLVEEIAASINKAGLADEIPDIKIEVPKDTKNGDYATNIAMVLTKIAKRNPREIAQAIVDNLDTEKAHVKQIDIAGPGFINFYLDNQYLTAIIPEAIEKGDQFGYVNESKGQNVLLEYVSANPTGDLHIGHARNAAVGDALANILTAAGYNVTREYYINDAGNQITNLARSIETRFFEALGDNSYSMPEDGYNGKDIIEIGKDLAEKRPEIKDYSEEARLKEFRKLGVEYEMAKLKNDLAEFNTHFDNWFSETSLYEKGEILEVLAKMKELGYTYEADGATWLRTTDFKDDKDRVLIKNDGTYTYFLPDIAYHFDKVKRGNDILIDLFGADHHGYINRLKASLETFGVDSNRLEIQIMQMVRLMENGKEVKMSKRTGNAITLREIMDEVGVDAARYFLTMRSPDSHFDFDMELAKEQSQDNPVYYAQYAHARICSILKQAKEQGIEVAAANDFTTITNEKAIELLKKVADFEPTIESAAEHRSAHRITNYIQDLASHFHKFYNAEKVLTDDIEKTKAHVAMIEAVRITLKNALAMVGVSAPESM.

Residues 130 to 140 (ANPTGDLHIGH) carry the 'HIGH' region motif.

The protein belongs to the class-I aminoacyl-tRNA synthetase family. In terms of assembly, monomer.

It localises to the cytoplasm. The catalysed reaction is tRNA(Arg) + L-arginine + ATP = L-arginyl-tRNA(Arg) + AMP + diphosphate. The sequence is that of Arginine--tRNA ligase from Staphylococcus aureus (strain bovine RF122 / ET3-1).